The following is a 579-amino-acid chain: O-fucosyltransferase 24 (579 aa).

The chain crosses the membrane as a helical; Signal-anchor for type II membrane protein span at residues 58-78; the sequence is LWAFSLFLLSILGISLRLGLC. N-linked (GlcNAc...) asparagine glycosylation is present at Asn133. Residue 355–357 participates in substrate binding; sequence HLR. 3 N-linked (GlcNAc...) asparagine glycosylation sites follow: Asn528, Asn573, and Asn576.

Belongs to the glycosyltransferase GT106 family.

Its subcellular location is the membrane. The protein operates within glycan metabolism. In Arabidopsis thaliana (Mouse-ear cress), this protein is O-fucosyltransferase 24.